Consider the following 301-residue polypeptide: Ornithine carbamoyltransferase (301 aa).

Residues R107 and H134–Q137 contribute to the carbamoyl phosphate site. L-ornithine-binding positions include N165, D220, and S224 to M225. Residues C260 to L261 and R288 each bind carbamoyl phosphate.

The protein belongs to the aspartate/ornithine carbamoyltransferase superfamily. OTCase family. As to quaternary structure, homotrimer.

The protein resides in the cytoplasm. The enzyme catalyses carbamoyl phosphate + L-ornithine = L-citrulline + phosphate + H(+). It functions in the pathway amino-acid biosynthesis; L-arginine biosynthesis; L-arginine from L-ornithine and carbamoyl phosphate: step 1/3. Inhibited by delta-N-phosphonoacetyl-L-ornithine. Its function is as follows. Reversibly catalyzes the transfer of the carbamoyl group from carbamoyl phosphate (CP) to the N(epsilon) atom of ornithine (ORN) to produce L-citrulline, which is a substrate for argininosuccinate synthetase, the enzyme involved in the final step in arginine biosynthesis. The chain is Ornithine carbamoyltransferase from Thermus thermophilus (strain ATCC BAA-163 / DSM 7039 / HB27).